A 542-amino-acid chain; its full sequence is Phosphoenolpyruvate carboxykinase (ATP) (542 aa).

3 residues coordinate substrate: arginine 67, tyrosine 208, and lysine 214. Residues lysine 214, histidine 233, and 249–257 (GLSGTGKTT) contribute to the ATP site. Lysine 214 and histidine 233 together coordinate Mn(2+). Aspartate 270 contacts Mn(2+). ATP is bound by residues glutamate 298, arginine 334, 450–451 (RI), and threonine 456. Residue arginine 334 coordinates substrate.

This sequence belongs to the phosphoenolpyruvate carboxykinase (ATP) family. As to quaternary structure, monomer. It depends on Mn(2+) as a cofactor.

The protein localises to the cytoplasm. The enzyme catalyses oxaloacetate + ATP = phosphoenolpyruvate + ADP + CO2. It functions in the pathway carbohydrate biosynthesis; gluconeogenesis. Its function is as follows. Involved in the gluconeogenesis. Catalyzes the conversion of oxaloacetate (OAA) to phosphoenolpyruvate (PEP) through direct phosphoryl transfer between the nucleoside triphosphate and OAA. The polypeptide is Phosphoenolpyruvate carboxykinase (ATP) (Vibrio vulnificus (strain YJ016)).